The sequence spans 498 residues: Cystathionine beta-synthase (498 aa).

The interval 1–25 is disordered; sequence MSAPEGPSKCTWTPNTTENTPHTTR. Residues 11 to 22 show a composition bias toward low complexity; that stretch reads TWTPNTTENTPH. Lys-73 carries the post-translational modification N6-(pyridoxal phosphate)lysine. Pyridoxal 5'-phosphate is bound by residues Asn-103, 210–214, and Ser-302; that span reads GTGGT. CBS domains follow at residues 374 to 430 and 435 to 497; these read TLPK…KKAV and VSKV…SQQK.

This sequence belongs to the cysteine synthase/cystathionine beta-synthase family. Pyridoxal 5'-phosphate is required as a cofactor.

It carries out the reaction L-homocysteine + L-serine = L,L-cystathionine + H2O. It participates in amino-acid biosynthesis; L-cysteine biosynthesis; L-cysteine from L-homocysteine and L-serine: step 1/2. This chain is Cystathionine beta-synthase (cysB), found in Dictyostelium discoideum (Social amoeba).